The primary structure comprises 828 residues: G-type lectin S-receptor-like serine/threonine-protein kinase At2g19130 (828 aa).

A signal peptide spans 1-22 (MVSFLTLTSFFFICFFIHGSSA). Residues 23-146 (VDTISGDFTL…GSSLSANVLW (124 aa)) enclose the Bulb-type lectin domain. Topologically, residues 23–439 (VDTISGDFTL…GASGKSNNKG (417 aa)) are extracellular. Residues Asn85, Asn113, Asn203, Asn234, Asn240, and Asn255 are each glycosylated (N-linked (GlcNAc...) asparagine). In terms of domain architecture, EGF-like spans 286–322 (PRQQCQVYRYCGSFGICSDKSEPFCRCPQGFRPMSQK). Intrachain disulfides connect Cys290–Cys302, Cys296–Cys310, Cys372–Cys394, and Cys376–Cys382. Positions 341–422 (CSRGDINQFF…EGNIFYLRLA (82 aa)) constitute a PAN domain. The helical transmembrane segment at 440–460 (LIFGAVLGSLGVIVLVLLVVI) threads the bilayer. At 461–828 (LILRYRRRKR…KKMTNDNSSA (368 aa)) the chain is on the cytoplasmic side. Residues 493 to 770 (KNFSDKLGGG…QVVQILEGVL (278 aa)) enclose the Protein kinase domain. Residues 499 to 507 (LGGGGFGSV) and Lys521 contribute to the ATP site. Position 527 is a phosphoserine (Ser527). The tract at residues 582 to 600 (VEEKIVLGWKLRFQIALGT) is caM-binding. Asp619 functions as the Proton acceptor in the catalytic mechanism. At Thr653 the chain carries Phosphothreonine. Positions 796-828 (ESSSSSSHNSSQNHKHSSSSSSSKKMTNDNSSA) are disordered. The span at 797-828 (SSSSSSHNSSQNHKHSSSSSSSKKMTNDNSSA) shows a compositional bias: low complexity. Residue Ser815 is modified to Phosphoserine.

This sequence belongs to the protein kinase superfamily. Ser/Thr protein kinase family.

It is found in the cell membrane. The enzyme catalyses L-seryl-[protein] + ATP = O-phospho-L-seryl-[protein] + ADP + H(+). The catalysed reaction is L-threonyl-[protein] + ATP = O-phospho-L-threonyl-[protein] + ADP + H(+). The chain is G-type lectin S-receptor-like serine/threonine-protein kinase At2g19130 from Arabidopsis thaliana (Mouse-ear cress).